The sequence spans 389 residues: MLMDKLTELLKLLQNTESIEINEFRMDVEELELYLMPAVQQAIQKTVEVREAVEALPAEEFNPPIRSYPGEVAQVKLGEGTRKSVYLGGQKALYRFEEPQPNPPVVTFDVFDIPMPGLPRPIREHFSDVMEDPGDWARKAVKEYGANMVTIHLIGTGPKVMDKSPREAAKDIEEVLQAVDVPLVIGGSGDPEKDPLVLEKAAEAAEGERCLLASANLDLDYRKVARAALDHNHAVLSWAITDVNMQKTLNRYLLKEGLKREDIVMDPTTCALGYGIEFSIDVITRTRLAALKGDSDLQMPMSSGTTNAWGSREAWMKKDEWGPTDYRGPLWEIVTGLTMMLSGVDIFMMLHPTSVRLLREIGETFTREYMTAETPDLREWITELDYQEV.

This sequence belongs to the CdhD family. Heterodimer of delta and gamma chains. The ACDS complex is made up of alpha, epsilon, beta, gamma and delta chains with a probable stoichiometry of (alpha(2)epsilon(2))(4)-beta(8)-(gamma(1)delta(1))(8).

In terms of biological role, part of a complex that catalyzes the reversible cleavage of acetyl-CoA, allowing autotrophic growth from CO(2). Probably maintains the overall quaternary structure of the ACDS complex. The protein is Acetyl-CoA decarbonylase/synthase complex subunit delta of Methanothermobacter thermautotrophicus (strain ATCC 29096 / DSM 1053 / JCM 10044 / NBRC 100330 / Delta H) (Methanobacterium thermoautotrophicum).